The sequence spans 60 residues: Protein translocase subunit SecE (60 aa).

The helical transmembrane segment at 37–57 threads the bilayer; the sequence is LLGFALVGGIGYLIHLGYIIL.

Belongs to the SecE/SEC61-gamma family. Component of the Sec protein translocase complex. Heterotrimer consisting of SecY (alpha), SecG (beta) and SecE (gamma) subunits. The heterotrimers can form oligomers, although 1 heterotrimer is thought to be able to translocate proteins. Interacts with the ribosome. May interact with SecDF, and other proteins may be involved.

Its subcellular location is the cell membrane. Functionally, essential subunit of the Sec protein translocation channel SecYEG. Clamps together the 2 halves of SecY. May contact the channel plug during translocation. This Aeropyrum pernix (strain ATCC 700893 / DSM 11879 / JCM 9820 / NBRC 100138 / K1) protein is Protein translocase subunit SecE.